Here is a 79-residue protein sequence, read N- to C-terminus: Acyl carrier protein (79 aa).

Positions 2 to 77 (ADFEARVKEI…SAIDYVKTHV (76 aa)) constitute a Carrier domain. Residue S37 is modified to O-(pantetheine 4'-phosphoryl)serine.

Belongs to the acyl carrier protein (ACP) family. 4'-phosphopantetheine is transferred from CoA to a specific serine of apo-ACP by AcpS. This modification is essential for activity because fatty acids are bound in thioester linkage to the sulfhydryl of the prosthetic group.

It localises to the cytoplasm. Its pathway is lipid metabolism; fatty acid biosynthesis. Carrier of the growing fatty acid chain in fatty acid biosynthesis. This is Acyl carrier protein from Endomicrobium trichonymphae.